The chain runs to 132 residues: Ribonuclease P protein component 2 (132 aa).

Belongs to the eukaryotic/archaeal RNase P protein component 2 family. In terms of assembly, consists of a catalytic RNA component and at least 4-5 protein subunits.

The protein resides in the cytoplasm. It carries out the reaction Endonucleolytic cleavage of RNA, removing 5'-extranucleotides from tRNA precursor.. In terms of biological role, part of ribonuclease P, a protein complex that generates mature tRNA molecules by cleaving their 5'-ends. This Methanosarcina acetivorans (strain ATCC 35395 / DSM 2834 / JCM 12185 / C2A) protein is Ribonuclease P protein component 2.